A 384-amino-acid chain; its full sequence is S-adenosylmethionine synthase (384 aa).

Histidine 15 is a binding site for ATP. Position 17 (aspartate 17) interacts with Mg(2+). K(+) is bound at residue glutamate 43. L-methionine contacts are provided by glutamate 56 and glutamine 99. Residues 99–109 form a flexible loop region; sequence QSPDINQGVDR. ATP-binding positions include 164 to 166, 230 to 231, aspartate 239, 245 to 246, alanine 262, and lysine 266; these read DAK, RF, and RK. Aspartate 239 provides a ligand contact to L-methionine. Lysine 270 serves as a coordination point for L-methionine.

It belongs to the AdoMet synthase family. In terms of assembly, homotetramer; dimer of dimers. It depends on Mg(2+) as a cofactor. K(+) serves as cofactor.

Its subcellular location is the cytoplasm. It carries out the reaction L-methionine + ATP + H2O = S-adenosyl-L-methionine + phosphate + diphosphate. Its pathway is amino-acid biosynthesis; S-adenosyl-L-methionine biosynthesis; S-adenosyl-L-methionine from L-methionine: step 1/1. Its function is as follows. Catalyzes the formation of S-adenosylmethionine (AdoMet) from methionine and ATP. The overall synthetic reaction is composed of two sequential steps, AdoMet formation and the subsequent tripolyphosphate hydrolysis which occurs prior to release of AdoMet from the enzyme. The polypeptide is S-adenosylmethionine synthase (Edwardsiella ictaluri (strain 93-146)).